The primary structure comprises 456 residues: MLNSAMSVVILAAGKGTRMYSDIPKVLHTLAGKPMVQHVIDAATKLGAAQVHLVYGHGGELLKQTLKDDKLNWVLQAEQLGTGHAMQQAAPFFSDDEDILMLYGDVPLISVETLQRLRDAKPQGGIGLLTVKLDDPSGYGRITRENGKVTGIVEHKDATDEQRQIQEINTGILIANGADMKRWLSKLTNNNAQGEYYITDIIALAYQEGREIAAVHPARISETDGVNNRLQLSRLERIYQAEQAEKLLLSGVMLRDPARFDLRGTLHCGMDVEIDANVIIEGYVTLGHRVKIGAGCIIKNSVIGDDCEISPYSVVEDAHLEAACTIGPFARLRPGAELLAGAHVGNFVEMKKARLGKGSKAGHLTYLGDAEIGDNVNIGAGTITCNYDGANKFKTVIGDDVFVGSDTQLVAPVTVGKGATIAAGTTVTRNVADNELVLSRVPQVHKQGWQRPVKKK.

A pyrophosphorylase region spans residues 1–229 (MLNSAMSVVI…ISETDGVNNR (229 aa)). Residues 11–14 (LAAG), K25, Q76, 81–82 (GT), 103–105 (YGD), G140, E154, N169, and N227 contribute to the UDP-N-acetyl-alpha-D-glucosamine site. Position 105 (D105) interacts with Mg(2+). N227 is a binding site for Mg(2+). Positions 230 to 250 (LQLSRLERIYQAEQAEKLLLS) are linker. Positions 251–456 (GVMLRDPARF…QGWQRPVKKK (206 aa)) are N-acetyltransferase. UDP-N-acetyl-alpha-D-glucosamine is bound by residues R333 and K351. Residue H363 is the Proton acceptor of the active site. UDP-N-acetyl-alpha-D-glucosamine contacts are provided by Y366 and N377. Residues A380, 386–387 (NY), S405, A423, and R440 contribute to the acetyl-CoA site.

In the N-terminal section; belongs to the N-acetylglucosamine-1-phosphate uridyltransferase family. It in the C-terminal section; belongs to the transferase hexapeptide repeat family. As to quaternary structure, homotrimer. Mg(2+) serves as cofactor.

It is found in the cytoplasm. It catalyses the reaction alpha-D-glucosamine 1-phosphate + acetyl-CoA = N-acetyl-alpha-D-glucosamine 1-phosphate + CoA + H(+). The catalysed reaction is N-acetyl-alpha-D-glucosamine 1-phosphate + UTP + H(+) = UDP-N-acetyl-alpha-D-glucosamine + diphosphate. Its pathway is nucleotide-sugar biosynthesis; UDP-N-acetyl-alpha-D-glucosamine biosynthesis; N-acetyl-alpha-D-glucosamine 1-phosphate from alpha-D-glucosamine 6-phosphate (route II): step 2/2. It functions in the pathway nucleotide-sugar biosynthesis; UDP-N-acetyl-alpha-D-glucosamine biosynthesis; UDP-N-acetyl-alpha-D-glucosamine from N-acetyl-alpha-D-glucosamine 1-phosphate: step 1/1. It participates in bacterial outer membrane biogenesis; LPS lipid A biosynthesis. Functionally, catalyzes the last two sequential reactions in the de novo biosynthetic pathway for UDP-N-acetylglucosamine (UDP-GlcNAc). The C-terminal domain catalyzes the transfer of acetyl group from acetyl coenzyme A to glucosamine-1-phosphate (GlcN-1-P) to produce N-acetylglucosamine-1-phosphate (GlcNAc-1-P), which is converted into UDP-GlcNAc by the transfer of uridine 5-monophosphate (from uridine 5-triphosphate), a reaction catalyzed by the N-terminal domain. The chain is Bifunctional protein GlmU from Salmonella heidelberg (strain SL476).